The chain runs to 278 residues: HTH-type transcriptional activator RhaS (278 aa).

The HTH araC/xylS-type domain maps to 174-272; it reads NLLLAWLEDH…NWSPRDIRQG (99 aa). DNA-binding regions (H-T-H motif) lie at residues 191–212 and 239–262; these read DAVADQFSLSLRTLHRQLKQKT and VTDIAYRCGFSDSNHFSTLFRREF.

As to quaternary structure, binds DNA as a dimer.

Its subcellular location is the cytoplasm. Its function is as follows. Activates expression of the rhaBAD and rhaT operons. The chain is HTH-type transcriptional activator RhaS from Escherichia coli O45:K1 (strain S88 / ExPEC).